A 556-amino-acid polypeptide reads, in one-letter code: 2-isopropylmalate synthase (556 aa).

A Pyruvate carboxyltransferase domain is found at 33-307; sequence PIWLSSDLRD…DPQLDFSDID (275 aa). D42, H246, H248, and N282 together coordinate Mg(2+). Positions 439-556 are regulatory domain; sequence ATAPYTLKGH…ALHQAQEAAA (118 aa).

This sequence belongs to the alpha-IPM synthase/homocitrate synthase family. LeuA type 2 subfamily. In terms of assembly, homodimer. Mg(2+) is required as a cofactor.

The protein resides in the cytoplasm. The enzyme catalyses 3-methyl-2-oxobutanoate + acetyl-CoA + H2O = (2S)-2-isopropylmalate + CoA + H(+). The protein operates within amino-acid biosynthesis; L-leucine biosynthesis; L-leucine from 3-methyl-2-oxobutanoate: step 1/4. Functionally, catalyzes the condensation of the acetyl group of acetyl-CoA with 3-methyl-2-oxobutanoate (2-ketoisovalerate) to form 3-carboxy-3-hydroxy-4-methylpentanoate (2-isopropylmalate). The sequence is that of 2-isopropylmalate synthase from Stutzerimonas stutzeri (strain A1501) (Pseudomonas stutzeri).